The sequence spans 416 residues: Probable tRNA pseudouridine synthase D (416 aa).

The Nucleophile role is filled by Asp83. One can recognise a TRUD domain in the interval 158–379 (GFPNYFGYQR…PGGRRELLIR (222 aa)).

This sequence belongs to the pseudouridine synthase TruD family.

The enzyme catalyses uridine(13) in tRNA = pseudouridine(13) in tRNA. In terms of biological role, could be responsible for synthesis of pseudouridine from uracil-13 in transfer RNAs. This chain is Probable tRNA pseudouridine synthase D, found in Thermococcus onnurineus (strain NA1).